The primary structure comprises 177 residues: MSRVAKAPVSIPAGVEVTLNEQTLTVKGAKGSLTRVINNAVNVVIEDGVIKFLPVEGAVGAWAQAGTTRALVNNMVVGVSQGFERKLKLVGVGYRAKLVGADIDLTLGFSHPLVHKLPAGVTAECPSQTDIVLRGVDKQLIGQVAAEIRGYRPPEPYKGKGVRYDDEEVRRKEAKKK.

Positions 152-171 (RPPEPYKGKGVRYDDEEVRR) are enriched in basic and acidic residues. The disordered stretch occupies residues 152 to 177 (RPPEPYKGKGVRYDDEEVRRKEAKKK).

This sequence belongs to the universal ribosomal protein uL6 family. Part of the 50S ribosomal subunit.

Its function is as follows. This protein binds to the 23S rRNA, and is important in its secondary structure. It is located near the subunit interface in the base of the L7/L12 stalk, and near the tRNA binding site of the peptidyltransferase center. The chain is Large ribosomal subunit protein uL6 from Shewanella sp. (strain MR-4).